The sequence spans 1226 residues: Arf guanine nucleotide exchange factor SYT1 (1226 aa).

Disordered stretches follow at residues 17 to 39 (HSND…DKLR) and 113 to 158 (RNGQ…RNSK). Residues 131–142 (SIEKVPKPDGER) show a composition bias toward basic and acidic residues. A Phosphothreonine modification is found at Thr277. Disordered stretches follow at residues 311 to 405 (NSLM…TGMS), 954 to 1022 (STGS…NEDY), and 1178 to 1198 (LEHG…DGID). The segment covering 349–360 (LSRSRSQSTSFV) has biased composition (polar residues). Ser369 is subject to Phosphoserine. Residues 386–405 (GPTSVYNNKSNANSTITGMS) are compositionally biased toward polar residues. The SEC7 domain occupies 405 to 620 (SRRSSSIVNA…TYFYENVTAK (216 aa)). One can recognise a PH domain in the interval 844-1074 (ILQMGAIMNL…DSINLFSAYD (231 aa)). 2 stretches are compositionally biased toward low complexity: residues 956–969 (GSHT…SSSA) and 994–1017 (SSVS…SSND).

It is found in the cytoplasm. Inhibited by brefeldin A. Its function is as follows. Guanine nucleotide exchange factor for Arf GTPases, stimulating the nucleotide exchange from the GDP-bound to the GTP-bound form. Catalyzes both the GDP release by and the GTP binding to ARF2. Has no exchange activity on Rab GTPases. Involved in vesicular transport. The polypeptide is Arf guanine nucleotide exchange factor SYT1 (SYT1) (Saccharomyces cerevisiae (strain ATCC 204508 / S288c) (Baker's yeast)).